We begin with the raw amino-acid sequence, 243 residues long: Terpene cyclase dpmpB (243 aa).

Transmembrane regions (helical) follow at residues 13–33, 51–71, 78–98, 112–132, 141–161, 169–189, and 207–227; these read FLEVAWLADACKLLMGVGWTA, ALMPLCCNFAWELVYALILPF, WVHVTGLAFNCGVMYTAIKFA, LTWIFIASVAGWMSAHLALAA, AWSAYGCQLLLSVGGLCQLLC, SYLLWFSRFFGSLVLIPQDIL, and LWFVSIFLILDGSYGILLWYV.

It belongs to the paxB family.

It is found in the membrane. It participates in secondary metabolite biosynthesis; terpenoid biosynthesis. Functionally, terpene cyclase; part of the gene cluster that mediates the biosynthesis of diterpenoid pyrones. The first step of the pathway is the synthesis of the alpha-pyrone moiety by the polyketide synthase dpmpA via condensation of one acetyl-CoA starter unit with 3 malonyl-CoA units and 2 methylations. The alpha-pyrone is then combined with geranylgeranyl pyrophosphate (GGPP) formed by the GGPP synthase dpmpD through the action of the prenyltransferase dpmpC to yield a linear alpha-pyrone diterpenoid. Subsequent steps in the diterpenoid pyrone biosynthetic pathway involve the decalin core formation, which is initiated by the epoxidation of the C10-C11 olefin by the FAD-dependent oxidoreductase dpmpE, and is followed by a cyclization cascade catalyzed by the terpene cyclase dpmpB. The short chain dehydrogenase/reductase dpmpG then oxidizes the 8S hydroxy group to a ketone and the short chain dehydrogenase/reductase dpmpH reduces the ketone to the 8R hydroxy group to yield higginsianin B. Higginsianin B is further methylated by the methyltransferase dpmpI to produce the intermediate named FDDP B. The cytochrome P450 monooxygenase dpmpJ then oxidizes the C-26 methyl to primary alcohol, producing the final diterpenoid pyrone with a C-26 primary alcohol on the gamma-pyrone moiety named FDDP C. The sequence is that of Terpene cyclase dpmpB from Macrophomina phaseolina (strain MS6) (Charcoal rot fungus).